An 89-amino-acid chain; its full sequence is Small ribosomal subunit protein uS15 (89 aa).

It belongs to the universal ribosomal protein uS15 family. Part of the 30S ribosomal subunit. Forms a bridge to the 50S subunit in the 70S ribosome, contacting the 23S rRNA.

Its function is as follows. One of the primary rRNA binding proteins, it binds directly to 16S rRNA where it helps nucleate assembly of the platform of the 30S subunit by binding and bridging several RNA helices of the 16S rRNA. Functionally, forms an intersubunit bridge (bridge B4) with the 23S rRNA of the 50S subunit in the ribosome. The chain is Small ribosomal subunit protein uS15 from Bdellovibrio bacteriovorus (strain ATCC 15356 / DSM 50701 / NCIMB 9529 / HD100).